Reading from the N-terminus, the 201-residue chain is ATP-dependent Clp protease proteolytic subunit (201 aa).

S100 functions as the Nucleophile in the catalytic mechanism. The active site involves H125.

This sequence belongs to the peptidase S14 family. In terms of assembly, component of the chloroplastic Clp protease core complex.

The protein localises to the plastid. It is found in the chloroplast stroma. The catalysed reaction is Hydrolysis of proteins to small peptides in the presence of ATP and magnesium. alpha-casein is the usual test substrate. In the absence of ATP, only oligopeptides shorter than five residues are hydrolyzed (such as succinyl-Leu-Tyr-|-NHMec, and Leu-Tyr-Leu-|-Tyr-Trp, in which cleavage of the -Tyr-|-Leu- and -Tyr-|-Trp bonds also occurs).. Cleaves peptides in various proteins in a process that requires ATP hydrolysis. Has a chymotrypsin-like activity. Plays a major role in the degradation of misfolded proteins. The chain is ATP-dependent Clp protease proteolytic subunit from Ranunculus macranthus (Large buttercup).